Reading from the N-terminus, the 428-residue chain is MKNWKTLLLGIAMIANTSFAAPQVVDKVAAVVNNGVVLESDVDGLMQSVKLNAAQARQQLPDDATLRHQIMERLIMDQIILQMGQKMGVKISDEQLDQAIANIAKQNNMTLDQMRSRLAYDGLNYNTYRNQIRKEMIISEVRNNEVRRRITILPQEVESLAQQVGNQNDASTELNLSHILIPLPENPTSDQVNEAESQARAIVDQARNGADFGKLAIAHSADQQALNGGQMGWGRIQELPGIFAQALSTAKKGDIVGPIRSGVGFHILKVNDLRGESKNISVTEVHARHILLKPSPIMTDEQARVKLEQIAADIKSGKTTFAAAAKEFSQDPGSANQGGDLGWATPDIFDPAFRDALTRLNKGQMSAPVHSSFGWHLIELLDTRNVDKTDAAQKDRAYRMLMNRKFSEEAASWMQEQRASAYVKILSN.

Residues 1 to 20 (MKNWKTLLLGIAMIANTSFA) form the signal peptide. 2 PpiC domains span residues 171 to 272 (STEL…KVND) and 282 to 382 (VTEV…ELLD).

It localises to the periplasm. The enzyme catalyses [protein]-peptidylproline (omega=180) = [protein]-peptidylproline (omega=0). Its function is as follows. Chaperone involved in the correct folding and assembly of outer membrane proteins. Recognizes specific patterns of aromatic residues and the orientation of their side chains, which are found more frequently in integral outer membrane proteins. May act in both early periplasmic and late outer membrane-associated steps of protein maturation. The chain is Chaperone SurA from Escherichia coli O157:H7.